Consider the following 282-residue polypeptide: Bifunctional protein FolD (282 aa).

NADP(+) contacts are provided by residues 163-165 (NRS), Thr188, and Ile229.

The protein belongs to the tetrahydrofolate dehydrogenase/cyclohydrolase family. In terms of assembly, homodimer.

The catalysed reaction is (6R)-5,10-methylene-5,6,7,8-tetrahydrofolate + NADP(+) = (6R)-5,10-methenyltetrahydrofolate + NADPH. The enzyme catalyses (6R)-5,10-methenyltetrahydrofolate + H2O = (6R)-10-formyltetrahydrofolate + H(+). The protein operates within one-carbon metabolism; tetrahydrofolate interconversion. Its function is as follows. Catalyzes the oxidation of 5,10-methylenetetrahydrofolate to 5,10-methenyltetrahydrofolate and then the hydrolysis of 5,10-methenyltetrahydrofolate to 10-formyltetrahydrofolate. The polypeptide is Bifunctional protein FolD (Malacoplasma penetrans (strain HF-2) (Mycoplasma penetrans)).